The sequence spans 484 residues: Probable chitinase 2 (484 aa).

Residues 1-33 form the signal peptide; sequence MTLRSRLSGEAPQLWLLLLLASTASSLWASVAA. Residues 41–432 form the GH18 domain; the sequence is KVVVCYVSTW…RTINEATMLA (392 aa). Residues cysteine 45 and cysteine 70 are joined by a disulfide bond. Chitin-binding positions include 98 to 99 and 125 to 128; these read EE and GGWN. Catalysis depends on glutamate 168, which acts as the Proton donor. Chitin contacts are provided by residues tyrosine 169, 231–234, and tryptophan 384; that span reads MCYD. At serine 467 the chain carries Phosphoserine.

This sequence belongs to the glycosyl hydrolase 18 family. Chitinase class II subfamily.

It catalyses the reaction Random endo-hydrolysis of N-acetyl-beta-D-glucosaminide (1-&gt;4)-beta-linkages in chitin and chitodextrins.. The sequence is that of Probable chitinase 2 from Drosophila melanogaster (Fruit fly).